We begin with the raw amino-acid sequence, 959 residues long: DNA translocase FtsK 1 (959 aa).

3 consecutive transmembrane segments (helical) span residues 1–21, 39–59, and 83–103; these read MGLGWFGISSVWLLPMVWRYV, IWLATLAVLCASASLEALTSG, and GWTGAFLLMLGVLLWVAPMVF. Topologically, residues 104 to 959 are cytoplasmic; sequence GHSWRQLLAR…REVIAPGGGD (856 aa). Residues 122–427 form a disordered region; it reads PVQADARHDE…AAPPPPAVPA (306 aa). The span at 126 to 136 shows a compositional bias: basic and acidic residues; sequence DARHDEADDGL. Low complexity-rich tracts occupy residues 220 to 229 and 264 to 286; these read ATPKAATQAP and APSAPVEDAAPAISPAAEPDAPA. Pro residues predominate over residues 287-298; it reads SAPPEPAEPSPP. Acidic residues predominate over residues 333–379; that stretch reads PEPEPEPEAETEVTPEAEAEPEAEPEAEAEPEAEAEAEAEAEAEPEA. The span at 380–403 shows a compositional bias: low complexity; sequence EAPAPESVAPALQEAEAATAAEAP. Positions 605-814 constitute a FtsK domain; that stretch reads GNPVVTDLAR…FQVSSKIDSR (210 aa). 625-630 serves as a coordination point for ATP; it reads GSGKSV.

The protein belongs to the FtsK/SpoIIIE/SftA family. As to quaternary structure, homohexamer. Forms a ring that surrounds DNA.

Its subcellular location is the cell inner membrane. In terms of biological role, essential cell division protein that coordinates cell division and chromosome segregation. The N-terminus is involved in assembly of the cell-division machinery. The C-terminus functions as a DNA motor that moves dsDNA in an ATP-dependent manner towards the dif recombination site, which is located within the replication terminus region. Translocation stops specifically at Xer-dif sites, where FtsK interacts with the Xer recombinase, allowing activation of chromosome unlinking by recombination. FtsK orienting polar sequences (KOPS) guide the direction of DNA translocation. FtsK can remove proteins from DNA as it translocates, but translocation stops specifically at XerCD-dif site, thereby preventing removal of XerC and XerD from dif. The sequence is that of DNA translocase FtsK 1 (ftsK1) from Ralstonia nicotianae (strain ATCC BAA-1114 / GMI1000) (Ralstonia solanacearum).